The chain runs to 422 residues: Probable protease eep (422 aa).

Residue His18 participates in Zn(2+) binding. Glu19 is an active-site residue. His22 is a binding site for Zn(2+). The next 3 helical transmembrane spans lie at Phe176 to Leu196, Val349 to Pro369, and Glu394 to Trp414. Residues Pro179 to Lys273 enclose the PDZ domain.

This sequence belongs to the peptidase M50B family. It depends on Zn(2+) as a cofactor.

It localises to the cell membrane. In terms of biological role, involved in production of the peptide pheromone cAD1. In Enterococcus faecalis (strain ATCC 700802 / V583), this protein is Probable protease eep (eep).